Here is a 100-residue protein sequence, read N- to C-terminus: Small ribosomal subunit protein uS14 (100 aa).

The protein belongs to the universal ribosomal protein uS14 family. As to quaternary structure, part of the 30S ribosomal subunit. Contacts proteins S3 and S10.

Functionally, binds 16S rRNA, required for the assembly of 30S particles and may also be responsible for determining the conformation of the 16S rRNA at the A site. The sequence is that of Small ribosomal subunit protein uS14 from Synechocystis sp. (strain ATCC 27184 / PCC 6803 / Kazusa).